A 357-amino-acid polypeptide reads, in one-letter code: Alanine racemase (357 aa).

The Proton acceptor; specific for D-alanine role is filled by Lys34. N6-(pyridoxal phosphate)lysine is present on Lys34. Residue Arg127 coordinates substrate. The active-site Proton acceptor; specific for L-alanine is the Tyr252. Met301 contacts substrate.

It belongs to the alanine racemase family. Pyridoxal 5'-phosphate serves as cofactor.

The enzyme catalyses L-alanine = D-alanine. It participates in amino-acid biosynthesis; D-alanine biosynthesis; D-alanine from L-alanine: step 1/1. Catalyzes the interconversion of L-alanine and D-alanine. May also act on other amino acids. The polypeptide is Alanine racemase (alr) (Dichelobacter nodosus (strain VCS1703A)).